The following is a 316-amino-acid chain: Aspartate carbamoyltransferase catalytic subunit (316 aa).

Carbamoyl phosphate contacts are provided by R66 and T67. K94 contacts L-aspartate. Positions 116, 146, and 149 each coordinate carbamoyl phosphate. Residues R180 and R235 each contribute to the L-aspartate site. Residues G276 and P277 each contribute to the carbamoyl phosphate site.

It belongs to the aspartate/ornithine carbamoyltransferase superfamily. ATCase family. As to quaternary structure, heterododecamer (2C3:3R2) of six catalytic PyrB chains organized as two trimers (C3), and six regulatory PyrI chains organized as three dimers (R2).

It carries out the reaction carbamoyl phosphate + L-aspartate = N-carbamoyl-L-aspartate + phosphate + H(+). The protein operates within pyrimidine metabolism; UMP biosynthesis via de novo pathway; (S)-dihydroorotate from bicarbonate: step 2/3. Its function is as follows. Catalyzes the condensation of carbamoyl phosphate and aspartate to form carbamoyl aspartate and inorganic phosphate, the committed step in the de novo pyrimidine nucleotide biosynthesis pathway. This is Aspartate carbamoyltransferase catalytic subunit from Stenotrophomonas maltophilia (strain R551-3).